The chain runs to 322 residues: Lipoyl synthase 2 (322 aa).

The interval M1 to S36 is disordered. The span at T14–M34 shows a compositional bias: basic and acidic residues. Residues C67, C72, C78, C93, C97, C100, and S306 each contribute to the [4Fe-4S] cluster site. The Radical SAM core domain occupies W79–L295.

The protein belongs to the radical SAM superfamily. Lipoyl synthase family. [4Fe-4S] cluster is required as a cofactor.

It localises to the cytoplasm. It catalyses the reaction [[Fe-S] cluster scaffold protein carrying a second [4Fe-4S](2+) cluster] + N(6)-octanoyl-L-lysyl-[protein] + 2 oxidized [2Fe-2S]-[ferredoxin] + 2 S-adenosyl-L-methionine + 4 H(+) = [[Fe-S] cluster scaffold protein] + N(6)-[(R)-dihydrolipoyl]-L-lysyl-[protein] + 4 Fe(3+) + 2 hydrogen sulfide + 2 5'-deoxyadenosine + 2 L-methionine + 2 reduced [2Fe-2S]-[ferredoxin]. Its pathway is protein modification; protein lipoylation via endogenous pathway; protein N(6)-(lipoyl)lysine from octanoyl-[acyl-carrier-protein]: step 2/2. Functionally, catalyzes the radical-mediated insertion of two sulfur atoms into the C-6 and C-8 positions of the octanoyl moiety bound to the lipoyl domains of lipoate-dependent enzymes, thereby converting the octanoylated domains into lipoylated derivatives. The polypeptide is Lipoyl synthase 2 (Bradyrhizobium diazoefficiens (strain JCM 10833 / BCRC 13528 / IAM 13628 / NBRC 14792 / USDA 110)).